The primary structure comprises 265 residues: NAD-capped RNA hydrolase NudC (265 aa).

Arg76 provides a ligand contact to substrate. 4 residues coordinate Zn(2+): Cys106, Cys109, Cys124, and Cys127. Tyr132 is a binding site for substrate. Residues 133–256 enclose the Nudix hydrolase domain; it reads PRISPAMMVL…SIAHRLIRHA (124 aa). A divalent metal cation is bound by residues Ala166, Glu182, and Glu186. Positions 167–188 match the Nudix box motif; it reads GFVEPGETLEECVHRETWEEVG. 200–207 serves as a coordination point for substrate; the sequence is QSWPFPHS. Glu227 contributes to the a divalent metal cation binding site. Ala249 provides a ligand contact to substrate.

The protein belongs to the Nudix hydrolase family. NudC subfamily. In terms of assembly, homodimer. Requires Mg(2+) as cofactor. It depends on Mn(2+) as a cofactor. Zn(2+) serves as cofactor.

It carries out the reaction a 5'-end NAD(+)-phospho-ribonucleoside in mRNA + H2O = a 5'-end phospho-adenosine-phospho-ribonucleoside in mRNA + beta-nicotinamide D-ribonucleotide + 2 H(+). The catalysed reaction is NAD(+) + H2O = beta-nicotinamide D-ribonucleotide + AMP + 2 H(+). It catalyses the reaction NADH + H2O = reduced beta-nicotinamide D-ribonucleotide + AMP + 2 H(+). Its function is as follows. mRNA decapping enzyme that specifically removes the nicotinamide adenine dinucleotide (NAD) cap from a subset of mRNAs by hydrolyzing the diphosphate linkage to produce nicotinamide mononucleotide (NMN) and 5' monophosphate mRNA. The NAD-cap is present at the 5'-end of some mRNAs and stabilizes RNA against 5'-processing. Has preference for mRNAs with a 5'-end purine. Catalyzes the hydrolysis of a broad range of dinucleotide pyrophosphates. This is NAD-capped RNA hydrolase NudC from Chromobacterium violaceum (strain ATCC 12472 / DSM 30191 / JCM 1249 / CCUG 213 / NBRC 12614 / NCIMB 9131 / NCTC 9757 / MK).